Reading from the N-terminus, the 290-residue chain is Pyridoxal kinase PdxY (290 aa).

Residues S12 and 47-48 (TQ) each bind substrate. Residues D114, E151, K184, and 211 to 214 (RPLL) each bind ATP. Residue D225 coordinates substrate.

Belongs to the pyridoxine kinase family. PdxY subfamily. As to quaternary structure, homodimer. Mg(2+) is required as a cofactor.

The catalysed reaction is pyridoxal + ATP = pyridoxal 5'-phosphate + ADP + H(+). The protein operates within cofactor metabolism; pyridoxal 5'-phosphate salvage; pyridoxal 5'-phosphate from pyridoxal: step 1/1. Pyridoxal kinase involved in the salvage pathway of pyridoxal 5'-phosphate (PLP). Catalyzes the phosphorylation of pyridoxal to PLP. This chain is Pyridoxal kinase PdxY, found in Pseudomonas fluorescens (strain SBW25).